We begin with the raw amino-acid sequence, 103 residues long: Large ribosomal subunit protein eL42 (103 aa).

Zn(2+)-binding residues include cysteine 18 and cysteine 21. A C4-type zinc finger spans residues 18-81 (CPKCRTHTEH…TVLKLKCSKC (64 aa)). Positions 40–62 (LSEGERRYARKKKGYGSKRKPEQ) are disordered. Over residues 47-57 (YARKKKGYGSK) the composition is skewed to basic residues. 2 residues coordinate Zn(2+): cysteine 78 and cysteine 81.

This sequence belongs to the eukaryotic ribosomal protein eL42 family. In terms of assembly, part of the 50S ribosomal subunit. Zn(2+) is required as a cofactor.

Binds to the 23S rRNA. The chain is Large ribosomal subunit protein eL42 from Desulfurococcus amylolyticus (strain DSM 18924 / JCM 16383 / VKM B-2413 / 1221n) (Desulfurococcus kamchatkensis).